Reading from the N-terminus, the 200-residue chain is Sec-independent protein translocase protein TatB (200 aa).

Residues 2 to 22 form a helical membrane-spanning segment; the sequence is LPDIGGTELLIIAAVALIVVG. The interval 160–200 is disordered; it reads KAPRKRASQKQEITVEAPKAVRAPRKRASKAGDSTASDIVS. The segment covering 191–200 has biased composition (polar residues); it reads GDSTASDIVS.

This sequence belongs to the TatB family. As to quaternary structure, the Tat system comprises two distinct complexes: a TatABC complex, containing multiple copies of TatA, TatB and TatC subunits, and a separate TatA complex, containing only TatA subunits. Substrates initially bind to the TatABC complex, which probably triggers association of the separate TatA complex to form the active translocon.

The protein resides in the cell inner membrane. Its function is as follows. Part of the twin-arginine translocation (Tat) system that transports large folded proteins containing a characteristic twin-arginine motif in their signal peptide across membranes. Together with TatC, TatB is part of a receptor directly interacting with Tat signal peptides. TatB may form an oligomeric binding site that transiently accommodates folded Tat precursor proteins before their translocation. The protein is Sec-independent protein translocase protein TatB of Caulobacter vibrioides (strain ATCC 19089 / CIP 103742 / CB 15) (Caulobacter crescentus).